The chain runs to 309 residues: Lipoyl synthase (309 aa).

7 residues coordinate [4Fe-4S] cluster: C43, C48, C54, C70, C74, C77, and S283. One can recognise a Radical SAM core domain in the interval 56–272 (AVRKTATFMI…KEIAMQKGFS (217 aa)).

This sequence belongs to the radical SAM superfamily. Lipoyl synthase family. It depends on [4Fe-4S] cluster as a cofactor.

It is found in the cytoplasm. The catalysed reaction is [[Fe-S] cluster scaffold protein carrying a second [4Fe-4S](2+) cluster] + N(6)-octanoyl-L-lysyl-[protein] + 2 oxidized [2Fe-2S]-[ferredoxin] + 2 S-adenosyl-L-methionine + 4 H(+) = [[Fe-S] cluster scaffold protein] + N(6)-[(R)-dihydrolipoyl]-L-lysyl-[protein] + 4 Fe(3+) + 2 hydrogen sulfide + 2 5'-deoxyadenosine + 2 L-methionine + 2 reduced [2Fe-2S]-[ferredoxin]. The protein operates within protein modification; protein lipoylation via endogenous pathway; protein N(6)-(lipoyl)lysine from octanoyl-[acyl-carrier-protein]. Its function is as follows. Catalyzes the radical-mediated insertion of two sulfur atoms into the C-6 and C-8 positions of the octanoyl moiety bound to the lipoyl domains of lipoate-dependent enzymes, thereby converting the octanoylated domains into lipoylated derivatives. The protein is Lipoyl synthase of Shouchella clausii (strain KSM-K16) (Alkalihalobacillus clausii).